A 520-amino-acid chain; its full sequence is D-aminopeptidase (520 aa).

Catalysis depends on S62, which acts as the Nucleophile. K65 (proton donor/acceptor) is an active-site residue. The interval 477–487 is important for specificity; the sequence is QRSMDAPSPGE. D481 is a substrate binding site.

It belongs to the peptidase S12 family. In terms of assembly, homodimer.

It catalyses the reaction Release of an N-terminal D-amino acid from a peptide, Xaa-|-Yaa-, in which Xaa is preferably D-Ala, D-Ser or D-Thr. D-amino acid amides and methyl esters also are hydrolyzed, as is glycine amide.. With respect to regulation, inhibited by beta-lactam compounds such as 6-aminopenicillic acid, 7-aminocephalosporanic acid, benzylpenicillin and ampicillin. Inhibited by p-chloromercuribenzoate. In terms of biological role, hydrolyzes N-terminal residues in D-amino acid-containing peptides. The chain is D-aminopeptidase (dap) from Brucella anthropi (Ochrobactrum anthropi).